The primary structure comprises 384 residues: Mitogen-activated protein kinase 8 (384 aa).

Positions 26–321 (YQNLRPIGSG…VDEALQHPYI (296 aa)) constitute a Protein kinase domain. ATP is bound by residues 33–38 (GSGAQG) and Lys55. Asp151 (proton acceptor) is an active-site residue. Thr183 carries the phosphothreonine modification. The TXY motif lies at 183-185 (TPY). Position 185 is a phosphotyrosine (Tyr185).

It belongs to the protein kinase superfamily. CMGC Ser/Thr protein kinase family. MAP kinase subfamily. Mg(2+) serves as cofactor. Post-translationally, dually phosphorylated on Thr-183 and Tyr-185, which activates the enzyme.

It localises to the cytoplasm. The protein localises to the nucleus. It is found in the synapse. It carries out the reaction L-seryl-[protein] + ATP = O-phospho-L-seryl-[protein] + ADP + H(+). The enzyme catalyses L-threonyl-[protein] + ATP = O-phospho-L-threonyl-[protein] + ADP + H(+). Its activity is regulated as follows. Activated by threonine and tyrosine phosphorylation. Its function is as follows. Responds to activation by environmental stress and pro-inflammatory cytokines by phosphorylating a number of transcription factors, primarily components of AP-1 such as c-Jun and ATF2 and thus regulates AP-1 transcriptional activity. May play a role in the regulation of the circadian clock. The polypeptide is Mitogen-activated protein kinase 8 (mapk8) (Danio rerio (Zebrafish)).